The sequence spans 466 residues: Histidine--tRNA ligase (466 aa).

The protein belongs to the class-II aminoacyl-tRNA synthetase family. As to quaternary structure, homodimer.

Its subcellular location is the cytoplasm. It catalyses the reaction tRNA(His) + L-histidine + ATP = L-histidyl-tRNA(His) + AMP + diphosphate + H(+). The chain is Histidine--tRNA ligase (hisS) from Bifidobacterium longum (strain NCC 2705).